The chain runs to 210 residues: MDKSIPKATAKRLSLYYRIFKRFNTDGIEKASSKQIADALGIDSATVRRDFSYFGELGRRGFGYDVKKLMNFFAEILNDHSTTNVMLVGCGNIGRALLHYRFHDRNKMQISMAFDLDSNDLVGKTTEDGIPVYGISTINDHLIDSDIETAILTVPSTEAQEVADILVKAGIKGILSFSPVHLTLPKDIIVQYVDLTSELQTLLYFMNQQQ.

Positions 15-54 (LYYRIFKRFNTDGIEKASSKQIADALGIDSATVRRDFSYF) form a DNA-binding region, H-T-H motif. 89–94 (GCGNIG) is a binding site for NAD(+).

The protein belongs to the transcriptional regulatory Rex family. Homodimer.

The protein localises to the cytoplasm. Its function is as follows. Modulates transcription in response to changes in cellular NADH/NAD(+) redox state. This Streptococcus agalactiae serotype Ia (strain ATCC 27591 / A909 / CDC SS700) protein is Redox-sensing transcriptional repressor Rex.